The sequence spans 98 residues: uncharacterized protein (98 aa).

Residues A53 to V98 are disordered.

This is an uncharacterized protein from Mycolicibacterium smegmatis (strain ATCC 700084 / mc(2)155) (Mycobacterium smegmatis).